We begin with the raw amino-acid sequence, 45 residues long: Large ribosomal subunit protein bL34 (45 aa).

The disordered stretch occupies residues 1–45; it reads MTKRTLGGTVRKQKRTSGFRARMRSHTGQNVIRARRKKGRHRLTV. Composition is skewed to basic residues over residues 11 to 25 and 33 to 45; these read RKQKRTSGFRARMRS and RARRKKGRHRLTV.

The protein belongs to the bacterial ribosomal protein bL34 family.

This chain is Large ribosomal subunit protein bL34, found in Picosynechococcus sp. (strain ATCC 27264 / PCC 7002 / PR-6) (Agmenellum quadruplicatum).